We begin with the raw amino-acid sequence, 300 residues long: tRNA-cytidine(32) 2-sulfurtransferase (300 aa).

Residues 57–62 (SGGKDS) carry the PP-loop motif motif. [4Fe-4S] cluster is bound by residues cysteine 132, cysteine 135, and cysteine 223.

It belongs to the TtcA family. As to quaternary structure, homodimer. Mg(2+) serves as cofactor. The cofactor is [4Fe-4S] cluster.

It is found in the cytoplasm. The catalysed reaction is cytidine(32) in tRNA + S-sulfanyl-L-cysteinyl-[cysteine desulfurase] + AH2 + ATP = 2-thiocytidine(32) in tRNA + L-cysteinyl-[cysteine desulfurase] + A + AMP + diphosphate + H(+). It functions in the pathway tRNA modification. Catalyzes the ATP-dependent 2-thiolation of cytidine in position 32 of tRNA, to form 2-thiocytidine (s(2)C32). The sulfur atoms are provided by the cysteine/cysteine desulfurase (IscS) system. This chain is tRNA-cytidine(32) 2-sulfurtransferase, found in Xanthomonas campestris pv. campestris (strain 8004).